Reading from the N-terminus, the 216-residue chain is Probable inactive E3 ubiquitin-protein ligase SINAT6 (216 aa).

The SIAH-type zinc finger occupies 5 to 74 (INDLQVESRV…LLLHLRNDHN (70 aa)).

Belongs to the SINA (Seven in absentia) family. Homodimer. Interacts with SINAT1, SINAT2, SINAT3, SINAT4 and SINAT5. Interacts with ATG6 and TRAF1A. In terms of tissue distribution, expressed in roots, rosette leaves, cauline leaves, guard cells and flowers.

Its subcellular location is the cytoplasm. The protein resides in the nucleus. Its function is as follows. Probable inactive E3 ubiquitin-protein ligase that plays a role in regulation of autophagy. Upon starvation, involved in maintaining ATG6 homeostasis by competitively associating with ATG6, a component of the autophagosome complex. Acts as a positive regulator of drought stress response. Functions as a positive regulator of abscisic acid-mediated stomatal closure. This chain is Probable inactive E3 ubiquitin-protein ligase SINAT6, found in Arabidopsis thaliana (Mouse-ear cress).